The chain runs to 382 residues: Pyrimidine monooxygenase RutA (382 aa).

FMN contacts are provided by residues 68-69, Asn134, Glu143, 159-160, and Ser209; these read IK and RY.

The protein belongs to the NtaA/SnaA/DszA monooxygenase family. RutA subfamily.

The catalysed reaction is uracil + FMNH2 + NADH + O2 = (Z)-3-ureidoacrylate + FMN + NAD(+) + H2O + H(+). It catalyses the reaction thymine + FMNH2 + NADH + O2 = (Z)-2-methylureidoacrylate + FMN + NAD(+) + H2O + H(+). Catalyzes the pyrimidine ring opening between N-3 and C-4 by an unusual flavin hydroperoxide-catalyzed mechanism, adding oxygen atoms in the process to yield ureidoacrylate peracid, that immediately reacts with FMN forming ureidoacrylate and FMN-N(5)-oxide. The FMN-N(5)-oxide reacts spontaneously with NADH to produce FMN. Requires the flavin reductase RutF to regenerate FMN in vivo. The sequence is that of Pyrimidine monooxygenase RutA from Shigella flexneri serotype X (strain 2002017).